The chain runs to 1052 residues: Germline survival defective-1 (1052 aa).

Residues 1–25 (MRCLISYLFHSFLIFLKFIRSDVTA) form the signal peptide. Disordered regions lie at residues 41–320 (LMKS…DPKN), 478–543 (VNGI…QSVP), 667–689 (PSSQ…EEFE), 933–965 (KQTL…NSYA), and 1033–1052 (SNNT…NSNF). The segment covering 67–145 (ATATAAATTQ…SSTSSTSQQT (79 aa)) has biased composition (low complexity). Residues 163–172 (TSNTANSQSG) are compositionally biased toward polar residues. Residues 178 to 190 (TNKDRPKEKEKNT) show a composition bias toward basic and acidic residues. The segment covering 244-279 (NAKSSGFLSNSSLSSAGQISASSAPPVSTTPTAIPI) has biased composition (low complexity). Basic and acidic residues predominate over residues 305-320 (KRDEEPMPYKSTDPKN). Residues 424 to 732 (QHPPGLPPLL…QIEKNDNLFS (309 aa)) form a gld-4 binding region. The span at 480–514 (GISNNIPSDRQQLDSKPNTARGSSGNINQSNTTSP) shows a compositional bias: polar residues. The span at 674–689 (DENDTDSDHESEEEFE) shows a compositional bias: acidic residues. Residues 892-1052 (PIELPVNMQP…SGGGNQNSNF (161 aa)) are gld-3 binding. Residues 950-963 (EGSQQNGGTSSSNS) are compositionally biased toward low complexity. Over residues 1038-1052 (GVNGNSGGGNQNSNF) the composition is skewed to gly residues.

In terms of assembly, isoform C interacts (via C-terminus) with gld-3 isoform A (via C-terminus) in an RNA-independent manner. Isoform C interacts with gld-4. Expressed in the germline (at protein level). In the early embryo is expressed in all cells, then becomes gradually restricted to the germ cell lineage and enriches in P granules (at protein level). In adult hermaphrodites, is expressed in the mitotic region, accumulates during early stages of meiotic prophase I and is slightly less abundant in maturing oocytes (at protein level).

The protein resides in the cytoplasm. It localises to the cytoplasmic granule. Functionally, required maternally for germline survival by forming a maternal complex with gld-3. During hermaphrodite development forms a complex with gld-3 which promotes the sperm/oocyte switch freeing the translational repressor fbf to turn off sperm promoting factors. Required for proper oocyte differentiation and oogenic meiotic arrest. Stimulates the enzymatic activity of gld-4 and together they prevent gld-1 mRNA degradation. The sequence is that of Germline survival defective-1 from Caenorhabditis elegans.